Consider the following 221-residue polypeptide: PKHD-type hydroxylase P9515_13321 (221 aa).

A Fe2OG dioxygenase domain is found at 80–174 (TIHGIMFTKS…RLVCVGWIES (95 aa)). The Fe cation site is built by histidine 98, aspartate 100, and histidine 155. Arginine 165 lines the 2-oxoglutarate pocket.

Fe(2+) serves as cofactor. L-ascorbate is required as a cofactor.

In Prochlorococcus marinus (strain MIT 9515), this protein is PKHD-type hydroxylase P9515_13321.